A 427-amino-acid polypeptide reads, in one-letter code: Putative ABC transporter substrate-binding protein YesO (427 aa).

The protein belongs to the bacterial solute-binding protein 1 family.

Functionally, may play a role in the degradation of type I rhamnogalacturonan derived from plant cell walls. This is Putative ABC transporter substrate-binding protein YesO (yesO) from Bacillus subtilis (strain 168).